The sequence spans 289 residues: Ribosome-inactivating protein alpha-trichosanthin (289 aa).

The first 23 residues, 1–23, serve as a signal peptide directing secretion; it reads MIRFLVLSLLILTLFLTTPAVEG. The active site involves E183. Positions 271-289 are cleaved as a propeptide — removed in mature form; it reads AMDDDVPMTQSFGCGSYAI.

The protein belongs to the ribosome-inactivating protein family. Type 1 RIP subfamily.

The enzyme catalyses Endohydrolysis of the N-glycosidic bond at one specific adenosine on the 28S rRNA.. Inactivates eukaryotic 60S ribosomal subunits. In Trichosanthes kirilowii (Chinese snake gourd), this protein is Ribosome-inactivating protein alpha-trichosanthin.